Reading from the N-terminus, the 169-residue chain is Small proline-rich protein 3 (169 aa).

Over residues 1–24 the composition is skewed to low complexity; it reads MSSYQQKQTFTPPPQLQQQQVKQP. The interval 1 to 57 is disordered; the sequence is MSSYQQKQTFTPPPQLQQQQVKQPSQPPPQEIFVPTTKEPCHSKVPQPGNTKIPEPG. Ser-2 carries the N-acetylserine modification. Repeat copies occupy residues 43 to 50, 51 to 58, 59 to 66, 67 to 74, 75 to 82, 83 to 90, 91 to 98, 99 to 106, 107 to 114, 115 to 122, 123 to 130, 131 to 138, 139 to 146, and 147 to 154. The 14 X 8 AA approximate tandem repeats stretch occupies residues 43 to 154; sequence SKVPQPGNTK…GYTKLPEPCP (112 aa). The segment at 150-169 is disordered; the sequence is PEPCPSTVTPGPAQQKTKQK. Over residues 155–169 the composition is skewed to polar residues; the sequence is STVTPGPAQQKTKQK.

It localises to the cytoplasm. Functionally, cross-linked envelope protein of keratinocytes. The polypeptide is Small proline-rich protein 3 (SPRR3) (Homo sapiens (Human)).